The sequence spans 466 residues: Ribulose bisphosphate carboxylase large chain (466 aa).

N6,N6,N6-trimethyllysine is present on Lys-5. Positions 114 and 164 each coordinate substrate. The active-site Proton acceptor is the Lys-166. Lys-168 lines the substrate pocket. Residues Lys-192, Asp-194, and Glu-195 each contribute to the Mg(2+) site. The residue at position 192 (Lys-192) is an N6-carboxylysine. Catalysis depends on His-285, which acts as the Proton acceptor. Residues Arg-286, His-318, and Ser-370 each coordinate substrate.

The protein belongs to the RuBisCO large chain family. Type I subfamily. Heterohexadecamer of 8 large chains and 8 small chains; disulfide-linked. The disulfide link is formed within the large subunit homodimers. Mg(2+) serves as cofactor. In terms of processing, the disulfide bond which can form in the large chain dimeric partners within the hexadecamer appears to be associated with oxidative stress and protein turnover.

It is found in the plastid. Its subcellular location is the chloroplast. The catalysed reaction is 2 (2R)-3-phosphoglycerate + 2 H(+) = D-ribulose 1,5-bisphosphate + CO2 + H2O. The enzyme catalyses D-ribulose 1,5-bisphosphate + O2 = 2-phosphoglycolate + (2R)-3-phosphoglycerate + 2 H(+). Its function is as follows. RuBisCO catalyzes two reactions: the carboxylation of D-ribulose 1,5-bisphosphate, the primary event in carbon dioxide fixation, as well as the oxidative fragmentation of the pentose substrate in the photorespiration process. Both reactions occur simultaneously and in competition at the same active site. This chain is Ribulose bisphosphate carboxylase large chain, found in Betula nigra (River birch).